The chain runs to 128 residues: Large ribosomal subunit protein bL17 (128 aa).

It belongs to the bacterial ribosomal protein bL17 family. As to quaternary structure, part of the 50S ribosomal subunit. Contacts protein L32.

The sequence is that of Large ribosomal subunit protein bL17 from Proteus mirabilis (strain HI4320).